The following is a 100-amino-acid chain: Urease subunit gamma (100 aa).

The protein belongs to the urease gamma subunit family. As to quaternary structure, heterotrimer of UreA (gamma), UreB (beta) and UreC (alpha) subunits. Three heterotrimers associate to form the active enzyme.

Its subcellular location is the cytoplasm. It catalyses the reaction urea + 2 H2O + H(+) = hydrogencarbonate + 2 NH4(+). Its pathway is nitrogen metabolism; urea degradation; CO(2) and NH(3) from urea (urease route): step 1/1. The protein is Urease subunit gamma of Pseudomonas aeruginosa (strain LESB58).